The following is a 170-amino-acid chain: UPF0161 protein At3g09310 (170 aa).

Disordered stretches follow at residues 49 to 70 (CLSAKSTPSKPDPASPQDGEEL) and 147 to 170 (SGIKLREGDEEEEDNYDDEDQRKI). Over residues 154–170 (GDEEEEDNYDDEDQRKI) the composition is skewed to acidic residues.

Belongs to the UPF0161 family.

The sequence is that of UPF0161 protein At3g09310 from Arabidopsis thaliana (Mouse-ear cress).